The sequence spans 143 residues: Periplasmic nitrate reductase, electron transfer subunit (143 aa).

An N-terminal signal peptide occupies residues 1–22; that stretch reads MKKILTLAAIVLAIGGCSGQQA. His-72, Cys-85, Cys-88, His-89, His-106, Cys-121, Cys-124, and His-125 together coordinate heme c.

The protein belongs to the NapB family. Component of the periplasmic nitrate reductase NapAB complex composed of NapA and NapB. Post-translationally, binds 2 heme C groups per subunit.

It localises to the periplasm. Its function is as follows. Electron transfer subunit of the periplasmic nitrate reductase complex NapAB. Receives electrons from the membrane-anchored tetraheme c-type CymA protein and transfers these to NapA subunit, thus allowing electron flow between membrane and periplasm. Not essential for nitrate reduction but confers advantage to the organism when grown on nitrate and thereby a fitness gain in utilizing nitrate. The sequence is that of Periplasmic nitrate reductase, electron transfer subunit from Shewanella oneidensis (strain ATCC 700550 / JCM 31522 / CIP 106686 / LMG 19005 / NCIMB 14063 / MR-1).